Here is a 135-residue protein sequence, read N- to C-terminus: Germinal center-associated signaling and motility-like protein (135 aa).

A disordered region spans residues 1–68 (MGNYLLRKLS…ENGSGSEEVC (68 aa)). The segment covering 22–48 (GNPDEERKRQEMTTFERKLQDQDKKSQ) has biased composition (basic and acidic residues). Residues 26–50 (EERKRQEMTTFERKLQDQDKKSQEV) adopt a coiled-coil conformation. The span at 51–66 (SSTSNQENENGSGSEE) shows a compositional bias: low complexity.

In Homo sapiens (Human), this protein is Germinal center-associated signaling and motility-like protein (GCSAML).